The sequence spans 429 residues: Inositol-3-phosphate synthase 1 (429 aa).

The helical transmembrane segment at 12-32 (LGVLVVGVGGAVATTMIVGTL) threads the bilayer. NAD(+) contacts are provided by Ala-22, Val-23, Asp-79, Ala-116, Ala-165, Thr-167, Tyr-201, Ser-244, Arg-276, Asp-277, and Lys-290.

This sequence belongs to the myo-inositol 1-phosphate synthase family. In terms of assembly, homotetramer. NAD(+) serves as cofactor.

It is found in the membrane. It carries out the reaction D-glucose 6-phosphate = 1D-myo-inositol 3-phosphate. It functions in the pathway polyol metabolism; myo-inositol biosynthesis; myo-inositol from D-glucose 6-phosphate: step 1/2. Its function is as follows. Key enzyme in myo-inositol biosynthesis pathway that catalyzes the conversion of glucose 6-phosphate to 1D-myo-inositol 3-phosphate in a NAD-dependent manner. The chain is Inositol-3-phosphate synthase 1 from Bacteroides thetaiotaomicron (strain ATCC 29148 / DSM 2079 / JCM 5827 / CCUG 10774 / NCTC 10582 / VPI-5482 / E50).